Consider the following 428-residue polypeptide: D-amino acid dehydrogenase (428 aa).

An FAD-binding site is contributed by 3–17; that stretch reads VVILGSGVVGVASAY.

Belongs to the DadA oxidoreductase family. FAD serves as cofactor.

The enzyme catalyses a D-alpha-amino acid + A + H2O = a 2-oxocarboxylate + AH2 + NH4(+). The protein operates within amino-acid degradation; D-alanine degradation; NH(3) and pyruvate from D-alanine: step 1/1. Functionally, oxidative deamination of D-amino acids. In Burkholderia mallei (strain NCTC 10247), this protein is D-amino acid dehydrogenase.